The sequence spans 282 residues: Small ribosomal subunit protein uS2 (282 aa).

The segment at 245–266 is disordered; that stretch reads AEEAVEELPLPTGEAQDEASSK.

It belongs to the universal ribosomal protein uS2 family.

The protein is Small ribosomal subunit protein uS2 (rpsB) of Chlamydia trachomatis serovar D (strain ATCC VR-885 / DSM 19411 / UW-3/Cx).